A 447-amino-acid polypeptide reads, in one-letter code: N-succinylarginine dihydrolase (447 aa).

Substrate-binding positions include 19-28, Asn-110, and 137-138; these read AGLSFGNVAS and HR. Glu-174 is an active-site residue. Substrate is bound at residue Arg-214. His-250 is a catalytic residue. The substrate site is built by Asp-252 and Asn-364. Residue Cys-370 is the Nucleophile of the active site.

It belongs to the succinylarginine dihydrolase family. In terms of assembly, homodimer.

The enzyme catalyses N(2)-succinyl-L-arginine + 2 H2O + 2 H(+) = N(2)-succinyl-L-ornithine + 2 NH4(+) + CO2. The protein operates within amino-acid degradation; L-arginine degradation via AST pathway; L-glutamate and succinate from L-arginine: step 2/5. Its function is as follows. Catalyzes the hydrolysis of N(2)-succinylarginine into N(2)-succinylornithine, ammonia and CO(2). The chain is N-succinylarginine dihydrolase from Idiomarina loihiensis (strain ATCC BAA-735 / DSM 15497 / L2-TR).